The primary structure comprises 247 residues: ATP synthase subunit a, chloroplastic (247 aa).

A run of 5 helical transmembrane segments spans residues 38-58 (QVLITSWVVIALLLVSAILII), 95-115 (VPFIGTLFLFIFVSNWSGALL), 134-154 (INTTVALALLTSIAYFYAGLS), 199-219 (LVVVVLVSLVPLVVPIPVMFL), and 220-240 (GLFTSGIQALIFATLAAAYIG).

It belongs to the ATPase A chain family. F-type ATPases have 2 components, CF(1) - the catalytic core - and CF(0) - the membrane proton channel. CF(1) has five subunits: alpha(3), beta(3), gamma(1), delta(1), epsilon(1). CF(0) has four main subunits: a, b, b' and c.

It localises to the plastid. Its subcellular location is the chloroplast thylakoid membrane. In terms of biological role, key component of the proton channel; it plays a direct role in the translocation of protons across the membrane. This is ATP synthase subunit a, chloroplastic from Glycine max (Soybean).